The following is a 186-amino-acid chain: uncharacterized protein (186 aa).

The first 18 residues, 1–18, serve as a signal peptide directing secretion; sequence MNKFLFAAALIVSGLLVG. Cysteine 19 is lipidated: N-palmitoyl cysteine. Cysteine 19 carries S-diacylglycerol cysteine lipidation.

Its subcellular location is the cell membrane. This is an uncharacterized protein from Escherichia coli (strain K12).